The following is a 595-amino-acid chain: UvrABC system protein C (595 aa).

The GIY-YIG domain maps to 14–91 (NNPGCYLHKD…IQENMPKFNI (78 aa)). Positions 196-231 (DKIVNQLKAKMKDMSDQMEFERAAEYRDLIEAVSTL) constitute a UVR domain.

This sequence belongs to the UvrC family. Interacts with UvrB in an incision complex.

It is found in the cytoplasm. In terms of biological role, the UvrABC repair system catalyzes the recognition and processing of DNA lesions. UvrC both incises the 5' and 3' sides of the lesion. The N-terminal half is responsible for the 3' incision and the C-terminal half is responsible for the 5' incision. This is UvrABC system protein C from Streptococcus thermophilus (strain ATCC BAA-250 / LMG 18311).